Here is a 198-residue protein sequence, read N- to C-terminus: Recombination protein RecR (198 aa).

The C4-type zinc-finger motif lies at 58-73 (CSVCGNYTDTDPCAIC). In terms of domain architecture, Toprim spans 81–175 (SLVCVVEEPK…KVTRIAHGIP (95 aa)).

This sequence belongs to the RecR family.

May play a role in DNA repair. It seems to be involved in an RecBC-independent recombinational process of DNA repair. It may act with RecF and RecO. This Clostridium acetobutylicum (strain ATCC 824 / DSM 792 / JCM 1419 / IAM 19013 / LMG 5710 / NBRC 13948 / NRRL B-527 / VKM B-1787 / 2291 / W) protein is Recombination protein RecR.